A 316-amino-acid polypeptide reads, in one-letter code: LIM/homeobox protein lim-6 (316 aa).

LIM zinc-binding domains lie at 40-101 (KLCS…LYGK) and 102-163 (RCRR…ICNF). The segment at residues 186-245 (PKRPRTILNAQQRRQFKTAFERSSKPSRKVREQLANETGLSVRVVQVWFQNQRAKIKKLN) is a DNA-binding region (homeobox). A disordered region spans residues 244-297 (LNKKDSDSGDTFKHGPGSEGRSTEDIRSSDDEEESVINLDADEVETSETSSYTD). The segment covering 246 to 256 (KKDSDSGDTFK) has biased composition (basic and acidic residues). Residues 273–289 (DDEEESVINLDADEVET) show a composition bias toward acidic residues.

The protein localises to the nucleus. In terms of biological role, transcription factor. Required for the terminal differentiation of sensory- and motor-neurons, especially GABAergic neurons, and for morphological aspects of uterine development. Plays a role in the cell-type-specific regulation of glutamic acid decarboxylase unc-25. Involved in promoting sleep-like behavioral quiescence, acting by modulating expression of transcription factor aptf-1 in the single sleep-active ring interneuron RIS. Plays a role in regulation of RIS differentiation. Required for the functional asymmetry of the ASER and ASEL chemosensory neuron pair, conferring the ability to discriminate sodium from chloride, perhaps by modulating expression of receptor-type guanylate cyclases, such as gcy-5. Involved in regulating postembryonic axon maintenance in the ventral nerve cord, acting in concert with LIM homeobox protein ceh-14, via modulation of expression of immunoglobulin domain zig genes in the interneuron PVT. May play a role in the functions of the excretory gland cell. The sequence is that of LIM/homeobox protein lim-6 from Caenorhabditis elegans.